Here is a 394-residue protein sequence, read N- to C-terminus: Elongation factor Tu (394 aa).

In terms of domain architecture, tr-type G spans 10-204 (KEHANIGTIG…AVDDYIPTPE (195 aa)). The interval 19–26 (GHVDHGKT) is G1. 19–26 (GHVDHGKT) serves as a coordination point for GTP. Thr-26 provides a ligand contact to Mg(2+). Residues 60–64 (GITIN) are G2. The segment at 81–84 (DCPG) is G3. Residues 81-85 (DCPGH) and 136-139 (NKVD) contribute to the GTP site. The G4 stretch occupies residues 136–139 (NKVD). A G5 region spans residues 174-176 (SAL).

This sequence belongs to the TRAFAC class translation factor GTPase superfamily. Classic translation factor GTPase family. EF-Tu/EF-1A subfamily. Monomer.

It localises to the cytoplasm. It catalyses the reaction GTP + H2O = GDP + phosphate + H(+). Functionally, GTP hydrolase that promotes the GTP-dependent binding of aminoacyl-tRNA to the A-site of ribosomes during protein biosynthesis. This Staphylococcus haemolyticus (strain JCSC1435) protein is Elongation factor Tu.